Consider the following 97-residue polypeptide: MNLNDVIKGPLITEKLDKAREKFRQYSFIVDRKATKHDVARAVETLFKVTVEGVNTNIVRGKIKRVGRSIGKRPNFKKAVVTLKQGDSIELFEGGAA.

The protein belongs to the universal ribosomal protein uL23 family. Part of the 50S ribosomal subunit. Contacts protein L29, and trigger factor when it is bound to the ribosome.

In terms of biological role, one of the early assembly proteins it binds 23S rRNA. One of the proteins that surrounds the polypeptide exit tunnel on the outside of the ribosome. Forms the main docking site for trigger factor binding to the ribosome. In Myxococcus xanthus (strain DK1622), this protein is Large ribosomal subunit protein uL23.